The following is a 463-amino-acid chain: Phosphomannomutase (463 aa).

The active-site Phosphoserine intermediate is the Ser103. Mg(2+)-binding residues include Ser103, Asp248, Asp250, and Asp252.

The protein belongs to the phosphohexose mutase family. Mg(2+) serves as cofactor.

It is found in the cell membrane. It catalyses the reaction alpha-D-mannose 1-phosphate = D-mannose 6-phosphate. It functions in the pathway nucleotide-sugar biosynthesis; GDP-alpha-D-mannose biosynthesis; alpha-D-mannose 1-phosphate from D-fructose 6-phosphate: step 2/2. Its pathway is bacterial outer membrane biogenesis; LPS O-antigen biosynthesis. Involved in GDP-mannose biosynthesis which serves as the activated sugar nucleotide precursor for mannose residues in cell surface polysaccharides. This chain is Phosphomannomutase (rfbB), found in Vibrio cholerae serotype O1 (strain ATCC 39315 / El Tor Inaba N16961).